We begin with the raw amino-acid sequence, 148 residues long: Puroindoline-B (148 aa).

An N-terminal signal peptide occupies residues 1-19; sequence MKTLFLLALLALVASTTFA. Positions 20-29 are excised as a propeptide; sequence QYSEVGGWYN.

Post-translationally, five disulfide bonds are present. Endosperm and aleurone layer of developing kernels. In the aleurone layer, mainly localized to starch granules and the surface of the plasma membrane, forming a uniform layer, also abundant in the intercellular space. In the endosperm, mainly localized to starch granules and the plasma membrane, but less abundant in the intercellular space. Not found in roots or coleoptiles.

Its subcellular location is the membrane. It localises to the secreted. The protein localises to the extracellular space. Acts as a membranotoxin, probably through its antibacterial and antifungal activities, contributing to the defense mechanism of the plant against predators. Forms monovalent cation-selective ion channels in membranes. Has antibacterial activity against the Gram-positive bacteria S.aureus and C.michiganensis, and the Gram-negative bacteria E.coli, P.syringae pv phaseoli, A.tumefaciens and E.carotovora subsp carotovora. Acts synergistically with PINA against bacteria. Contributes to grain texture and hardness. This is Puroindoline-B (PINB) from Triticum aestivum (Wheat).